A 612-amino-acid polypeptide reads, in one-letter code: Peroxisomal carnitine O-octanoyltransferase (612 aa).

Methionine 1 carries the post-translational modification N-acetylmethionine. 2 positions are modified to N6-succinyllysine: lysine 40 and lysine 57. The Proton acceptor role is filled by histidine 327. CoA contacts are provided by residues lysine 406 and 410–417; that span reads KKEALHPD. Lysine 406 is modified (N6-acetyllysine; alternate). N6-succinyllysine; alternate is present on lysine 406. (R)-carnitine is bound by residues tyrosine 439, threonine 441, and threonine 452. Residues 610-612 carry the Microbody targeting signal motif; the sequence is AHL.

It belongs to the carnitine/choline acetyltransferase family. As to expression, liver.

It localises to the peroxisome. It catalyses the reaction octanoyl-CoA + (R)-carnitine = O-octanoyl-(R)-carnitine + CoA. The enzyme catalyses 4,8-dimethylnonanoyl-CoA + (R)-carnitine = O-4,8-dimethylnonanoyl-(R)-carnitine + CoA. It functions in the pathway lipid metabolism; fatty acid beta-oxidation. Functionally, beta-oxidation of fatty acids. The highest activity concerns the C6 to C10 chain length substrate. This is Peroxisomal carnitine O-octanoyltransferase (Crot) from Rattus norvegicus (Rat).